The primary structure comprises 502 residues: Glycerate kinase (502 aa).

It belongs to the glycerate kinase type-2 family.

Its subcellular location is the cytoplasm. The enzyme catalyses (R)-glycerate + ATP = (2R)-3-phosphoglycerate + ADP + H(+). The chain is Glycerate kinase (glyctk) from Danio rerio (Zebrafish).